The sequence spans 266 residues: tRNA pseudouridine synthase A (266 aa).

Asp-57 functions as the Nucleophile in the catalytic mechanism. Position 115 (Tyr-115) interacts with substrate.

It belongs to the tRNA pseudouridine synthase TruA family. In terms of assembly, homodimer.

It catalyses the reaction uridine(38/39/40) in tRNA = pseudouridine(38/39/40) in tRNA. Formation of pseudouridine at positions 38, 39 and 40 in the anticodon stem and loop of transfer RNAs. This is tRNA pseudouridine synthase A from Buchnera aphidicola subsp. Acyrthosiphon pisum (strain APS) (Acyrthosiphon pisum symbiotic bacterium).